Reading from the N-terminus, the 334-residue chain is Trans-3-hydroxy-L-proline dehydratase (334 aa).

C91 acts as the Proton acceptor in catalysis. Substrate contacts are provided by residues 92-93 (GH), D250, and 255-256 (GT).

The protein belongs to the proline racemase family.

The catalysed reaction is trans-3-hydroxy-L-proline = 1-pyrroline-2-carboxylate + H2O. In terms of biological role, catalyzes the dehydration of trans-3-hydroxy-L-proline (t3LHyp) to Delta(1)-pyrroline-2-carboxylate (Pyr2C). Is likely involved in a degradation pathway that converts t3LHyp to L-proline. Can also catalyze the epimerization of trans-4-hydroxy-L-proline (t4LHyp) to cis-4-hydroxy-D-proline (c4DHyp) in vitro. Displays no proline racemase activity. In Bacillus thuringiensis subsp. konkukian (strain 97-27), this protein is Trans-3-hydroxy-L-proline dehydratase.